The sequence spans 93 residues: Aspartyl/glutamyl-tRNA(Asn/Gln) amidotransferase subunit C (93 aa).

Belongs to the GatC family. In terms of assembly, heterotrimer of A, B and C subunits.

The enzyme catalyses L-glutamyl-tRNA(Gln) + L-glutamine + ATP + H2O = L-glutaminyl-tRNA(Gln) + L-glutamate + ADP + phosphate + H(+). It carries out the reaction L-aspartyl-tRNA(Asn) + L-glutamine + ATP + H2O = L-asparaginyl-tRNA(Asn) + L-glutamate + ADP + phosphate + 2 H(+). Its function is as follows. Allows the formation of correctly charged Asn-tRNA(Asn) or Gln-tRNA(Gln) through the transamidation of misacylated Asp-tRNA(Asn) or Glu-tRNA(Gln) in organisms which lack either or both of asparaginyl-tRNA or glutaminyl-tRNA synthetases. The reaction takes place in the presence of glutamine and ATP through an activated phospho-Asp-tRNA(Asn) or phospho-Glu-tRNA(Gln). The chain is Aspartyl/glutamyl-tRNA(Asn/Gln) amidotransferase subunit C from Rubrobacter xylanophilus (strain DSM 9941 / JCM 11954 / NBRC 16129 / PRD-1).